The chain runs to 162 residues: Ribonuclease P protein component (162 aa).

Residues 1–62 (MDEKDLATQP…GPPKAGGRLL (62 aa)) are disordered. Positions 21-36 (GPHEDPRRQERAEAQA) are enriched in basic and acidic residues.

Belongs to the RnpA family. As to quaternary structure, consists of a catalytic RNA component (M1 or rnpB) and a protein subunit.

It carries out the reaction Endonucleolytic cleavage of RNA, removing 5'-extranucleotides from tRNA precursor.. RNaseP catalyzes the removal of the 5'-leader sequence from pre-tRNA to produce the mature 5'-terminus. It can also cleave other RNA substrates such as 4.5S RNA. The protein component plays an auxiliary but essential role in vivo by binding to the 5'-leader sequence and broadening the substrate specificity of the ribozyme. In Thermus aquaticus, this protein is Ribonuclease P protein component.